The sequence spans 361 residues: Prostaglandin D2 receptor (361 aa).

Residues 1 to 21 (MRPLFYRCHNTTSVEKGNSAT) lie on the Extracellular side of the membrane. A glycan (N-linked (GlcNAc...) asparagine) is linked at asparagine 10. Residues 22 to 42 (MGGVLFSTGLVGNLLALGLLA) traverse the membrane as a helical segment. The Cytoplasmic portion of the chain corresponds to 43–58 (RSGLGSCPPRSPRPPP). A helical membrane pass occupies residues 59 to 79 (SVFYVLVFGLTITDLLGKCLV). The Extracellular portion of the chain corresponds to 80–107 (SPFVLSAYAQNRSLRELVPGSDSSLCQA). N-linked (GlcNAc...) asparagine glycosylation is present at asparagine 90. A disulfide bridge links cysteine 105 with cysteine 183. A helical transmembrane segment spans residues 108–128 (FAFIMSFFGLASTLQLLAMAL). The Cytoplasmic portion of the chain corresponds to 129–150 (ECWLSLGHPFFHRRHLTPRRGA). The helical transmembrane segment at 151-171 (MVAPVVGAFCLAFCALPLVGF) threads the bilayer. At 172–195 (GKFVQYCPGTWCFFQMVHEERSLS) the chain is on the extracellular side. Residues 196 to 216 (VLSYSVLYASLMLLLVLAIVL) traverse the membrane as a helical segment. The Cytoplasmic segment spans residues 217 to 262 (CNLSAMRNLYAMHLRLRGLLRPGSRERAEPGAGEREATPLHLEELD). Residues 263–283 (HLLLLALMTVLFTMCSLPLIY) traverse the membrane as a helical segment. Residues 284–310 (RAYYGAFKAVPEQNGTTEETEDLRALR) are Extracellular-facing. Asparagine 297 is a glycosylation site (N-linked (GlcNAc...) asparagine). The helical transmembrane segment at 311–331 (FLSVISIVDPWIFIIFRTSVF) threads the bilayer. The Cytoplasmic segment spans residues 332–361 (RMFFRKIFIRPLIYRNWHSNSCQTNMESSL).

The protein belongs to the G-protein coupled receptor 1 family.

The protein resides in the cell membrane. In terms of biological role, receptor for prostaglandin D2 (PGD2). The activity of this receptor is mainly mediated by G(s) proteins that stimulate adenylate cyclase, resulting in an elevation of intracellular cAMP. A mobilization of calcium is also observed, but without formation of inositol 1,4,5-trisphosphate. Involved in PLA2G3-dependent maturation of mast cells. PLA2G3 is secreted by immature mast cells and acts on nearby fibroblasts upstream to PTDGS to synthesize PGD2, which in turn promotes mast cell maturation and degranulation via PTGDR. This Bos taurus (Bovine) protein is Prostaglandin D2 receptor (PTGDR).